We begin with the raw amino-acid sequence, 307 residues long: Thioredoxin reductase (307 aa).

36–43 (DNAAPGGK) is a binding site for FAD. The cysteines at positions 138 and 141 are disulfide-linked. Residue 278–287 (DIRIKDIRQI) coordinates FAD.

It belongs to the class-II pyridine nucleotide-disulfide oxidoreductase family. In terms of assembly, homodimer. The cofactor is FAD.

It localises to the cytoplasm. The enzyme catalyses [thioredoxin]-dithiol + NADP(+) = [thioredoxin]-disulfide + NADPH + H(+). In Mycoplasmopsis pulmonis (strain UAB CTIP) (Mycoplasma pulmonis), this protein is Thioredoxin reductase (trxB).